The following is a 257-amino-acid chain: Photosystem I chlorophyll a/b-binding protein 2, chloroplastic (257 aa).

Residues 1–43 constitute a chloroplast transit peptide; the sequence is MASSLCASSAIAAISSPSFLGGKKLRLKKKLTVPAVSRPDASV. W55 serves as a coordination point for chlorophyll b. F75, S81, and E94 together coordinate chlorophyll a. Residue R99 coordinates chlorophyll b. Helical transmembrane passes span 100–120 and 133–153; these read WAML…IGIL and YFTD…WAEG. 2 residues coordinate chlorophyll b: E152 and R155. Residues K208, E209, N212, R214, Q226, and H241 each contribute to the chlorophyll a site. The chain crosses the membrane as a helical span at residues 215-235; sequence LAMLAVMGAWFQHIYTGTGPI.

The protein belongs to the light-harvesting chlorophyll a/b-binding (LHC) protein family. As to quaternary structure, the LHC complex consists of chlorophyll a-b binding proteins. Red-emitting heterodimers with LHCA3 and LHCA5. Binds to carotenoids. Binds at least 14 chlorophylls (8 Chl-a and 6 Chl-b) and carotenoids such as lutein and neoxanthin. is required as a cofactor. Post-translationally, photoregulated by reversible phosphorylation of its threonine residues.

It localises to the plastid. The protein localises to the chloroplast thylakoid membrane. In terms of biological role, the light-harvesting complex (LHC) functions as a light receptor, it captures and delivers excitation energy to photosystems with which it is closely associated, here photosystem I. In Arabidopsis thaliana (Mouse-ear cress), this protein is Photosystem I chlorophyll a/b-binding protein 2, chloroplastic.